The chain runs to 399 residues: MTVKVCVCGGGNGAHTLSGLAASRDGVEVRVLTLFADEAERWTKALGADELTVIVNEKDGTQTEVKSRPKVITKDPEIAISGADVVILTVPAFAHEGYFQAMAPYVQDSALIVGLPSQAGFEFQCRDILGDKAAAVSMMSFETLPWACRIKEFGRKVEVLGTKSVLAASLIKGTAKTVDPLSTLQMLHGAEPVFRLAKHFLEMLIMSYSFVHPAILFGRWGSWDGKPVPEAPLFYQGIDQATADMLTACSNECKDVANAIMAACPGNDLSDVKDIYQWYLEYYHEDIQDDHDLYHAITTNKSYKGLVHPVKAVDGGVAPDFGNRYLTEDIPMGMIVFKGVAIAAGVAIPSNDKLIMWAQEKIGKEYLVDGALTGKDVATTRCPQRYGFNTLDAILTGKK.

NADH is bound by residues 10-13 and 35-38; these read GGNG and FADE. Pyruvate-binding residues include Q118 and T143. Q118 is a binding site for substrate. C148 contacts NAD(+). Position 206 (M206) interacts with L-arginine. H212 is a pyruvate binding site. H212 is a catalytic residue. R324 contributes to the NAD(+) binding site.

The protein belongs to the lysopine/nopaline/octopine/opine/vitopine dehydrogenases family.

The enzyme catalyses D-octopine + NAD(+) + H2O = L-arginine + pyruvate + NADH + H(+). Agmatine acts as a competitive inhibitor of the condensation reaction where the L-arginine and agmatine substrates compete for the same site. Catalyzes the reverse reaction of octopine dehydrogenation. Acts on L-arginine in preference to other substrates such as canavanine, cysteine, L-alanine, ornithine or norvaline, owing to the presence of the positively charged guanidium group. The sequence is that of Octopine dehydrogenase from Pecten maximus (King scallop).